We begin with the raw amino-acid sequence, 493 residues long: NADH-ubiquinone oxidoreductase 51 kDa subunit, mitochondrial (493 aa).

The N-terminal 27 residues, 1-27 (MLSRTAAPTKASARTLSRAAAEQCRTF), are a transit peptide targeting the mitochondrion. 96 to 105 (GRGGAGFPSG) contacts NAD(+). 212–259 (GAGAYVCGEETSLIESLEGKPGKPRLKPPFPAAVGLFGCPSTVANVET) contacts FMN. Residues Cys391, Cys394, Cys397, and Cys437 each contribute to the [4Fe-4S] cluster site.

The protein belongs to the complex I 51 kDa subunit family. As to quaternary structure, complex I is composed of about 40 different subunits. This is a component of the flavoprotein-sulfur (FP) fragment of the enzyme. It depends on FMN as a cofactor. Requires [4Fe-4S] cluster as cofactor.

It is found in the mitochondrion inner membrane. It catalyses the reaction a ubiquinone + NADH + 5 H(+)(in) = a ubiquinol + NAD(+) + 4 H(+)(out). In terms of biological role, core subunit of the mitochondrial membrane respiratory chain NADH dehydrogenase (Complex I) that is believed to belong to the minimal assembly required for catalysis. Complex I functions in the transfer of electrons from NADH to the respiratory chain. The immediate electron acceptor for the enzyme is believed to be ubiquinone. This chain is NADH-ubiquinone oxidoreductase 51 kDa subunit, mitochondrial (nuo-51), found in Neurospora crassa (strain ATCC 24698 / 74-OR23-1A / CBS 708.71 / DSM 1257 / FGSC 987).